Reading from the N-terminus, the 313-residue chain is Glycine--tRNA ligase alpha subunit (313 aa).

Belongs to the class-II aminoacyl-tRNA synthetase family. As to quaternary structure, tetramer of two alpha and two beta subunits.

Its subcellular location is the cytoplasm. It carries out the reaction tRNA(Gly) + glycine + ATP = glycyl-tRNA(Gly) + AMP + diphosphate. This chain is Glycine--tRNA ligase alpha subunit, found in Leuconostoc mesenteroides subsp. mesenteroides (strain ATCC 8293 / DSM 20343 / BCRC 11652 / CCM 1803 / JCM 6124 / NCDO 523 / NBRC 100496 / NCIMB 8023 / NCTC 12954 / NRRL B-1118 / 37Y).